The following is a 269-amino-acid chain: Formamidopyrimidine-DNA glycosylase (269 aa).

The active-site Schiff-base intermediate with DNA is the Pro-2. Glu-3 serves as the catalytic Proton donor. Residue Lys-57 is the Proton donor; for beta-elimination activity of the active site. 3 residues coordinate DNA: His-90, Arg-109, and Arg-150. The FPG-type zinc finger occupies 235–269 (QVYGRAGEACLTCGTTIKRSKHGQRTTFYCPHCQR). Residue Arg-259 is the Proton donor; for delta-elimination activity of the active site.

This sequence belongs to the FPG family. Monomer. Zn(2+) is required as a cofactor.

The enzyme catalyses Hydrolysis of DNA containing ring-opened 7-methylguanine residues, releasing 2,6-diamino-4-hydroxy-5-(N-methyl)formamidopyrimidine.. The catalysed reaction is 2'-deoxyribonucleotide-(2'-deoxyribose 5'-phosphate)-2'-deoxyribonucleotide-DNA = a 3'-end 2'-deoxyribonucleotide-(2,3-dehydro-2,3-deoxyribose 5'-phosphate)-DNA + a 5'-end 5'-phospho-2'-deoxyribonucleoside-DNA + H(+). Involved in base excision repair of DNA damaged by oxidation or by mutagenic agents. Acts as a DNA glycosylase that recognizes and removes damaged bases. Has a preference for oxidized purines, such as 7,8-dihydro-8-oxoguanine (8-oxoG). Has AP (apurinic/apyrimidinic) lyase activity and introduces nicks in the DNA strand. Cleaves the DNA backbone by beta-delta elimination to generate a single-strand break at the site of the removed base with both 3'- and 5'-phosphates. This chain is Formamidopyrimidine-DNA glycosylase, found in Edwardsiella ictaluri (strain 93-146).